The primary structure comprises 317 residues: Ribonuclease Z (317 aa).

Residues His61, His63, Asp65, His66, His139, Asp210, and His268 each contribute to the Zn(2+) site. Asp65 (proton acceptor) is an active-site residue.

This sequence belongs to the RNase Z family. Homodimer. It depends on Zn(2+) as a cofactor.

It catalyses the reaction Endonucleolytic cleavage of RNA, removing extra 3' nucleotides from tRNA precursor, generating 3' termini of tRNAs. A 3'-hydroxy group is left at the tRNA terminus and a 5'-phosphoryl group is left at the trailer molecule.. With respect to regulation, inhibited by high salt concentrations. Zinc phosphodiesterase, which displays some tRNA 3'-processing endonuclease activity. Probably involved in tRNA maturation, by removing a 3'-trailer from precursor tRNA. Can also catalyze the 5' end cleavage of the 5S rRNA. The protein is Ribonuclease Z of Haloferax volcanii (strain ATCC 29605 / DSM 3757 / JCM 8879 / NBRC 14742 / NCIMB 2012 / VKM B-1768 / DS2) (Halobacterium volcanii).